The following is a 457-amino-acid chain: tRNA-2-methylthio-N(6)-dimethylallyladenosine synthase (457 aa).

The region spanning 3–120 is the MTTase N-terminal domain; sequence KKVYVKTFGC…LPQMIDARRA (118 aa). [4Fe-4S] cluster contacts are provided by Cys12, Cys49, Cys83, Cys157, Cys161, and Cys164. In terms of domain architecture, Radical SAM core spans 143-377; sequence RVEGPSAFVS…QATIEENVAR (235 aa). Residues 380 to 447 enclose the TRAM domain; the sequence is QSMVGKVERI…PHSLRGELVI (68 aa).

Belongs to the methylthiotransferase family. MiaB subfamily. In terms of assembly, monomer. The cofactor is [4Fe-4S] cluster.

It localises to the cytoplasm. The catalysed reaction is N(6)-dimethylallyladenosine(37) in tRNA + (sulfur carrier)-SH + AH2 + 2 S-adenosyl-L-methionine = 2-methylsulfanyl-N(6)-dimethylallyladenosine(37) in tRNA + (sulfur carrier)-H + 5'-deoxyadenosine + L-methionine + A + S-adenosyl-L-homocysteine + 2 H(+). Its function is as follows. Catalyzes the methylthiolation of N6-(dimethylallyl)adenosine (i(6)A), leading to the formation of 2-methylthio-N6-(dimethylallyl)adenosine (ms(2)i(6)A) at position 37 in tRNAs that read codons beginning with uridine. In Burkholderia cenocepacia (strain ATCC BAA-245 / DSM 16553 / LMG 16656 / NCTC 13227 / J2315 / CF5610) (Burkholderia cepacia (strain J2315)), this protein is tRNA-2-methylthio-N(6)-dimethylallyladenosine synthase.